Here is a 182-residue protein sequence, read N- to C-terminus: Phospholipase A2 inhibitor gamma subunit A2 (182 aa).

8 disulfide bridges follow: C3-C27, C6-C13, C20-C48, C54-C75, C76-C81, C99-C124, C117-C146, and C150-C172. Residue N157 is glycosylated (N-linked (GlcNAc...) asparagine).

It belongs to the CNF-like-inhibitor family. Heterodimer of subunit A and subunit B.

Its subcellular location is the secreted. Phospholipase A2 (PA2) inhibitor. Inhibits the enzymatic activity of PA2 of Deinagkistrodon acutus. Also shows a wide anti-hemorrhage activities to D.acutus, Naja atra and Agkistrodon halys venom. The native protein is more potent than the recombinant one. This chain is Phospholipase A2 inhibitor gamma subunit A2, found in Trimerodytes annularis (Red-bellied annulate keelback).